The sequence spans 476 residues: MKPILPDYNNAGVLIIGDVMLDRYWYGPTSRISPEAPVPVVKVENNEERPGGAANVAMNIASLGGHARIVGLTGMDEPAKVLTETLNSLKVKCDFVALPEYPTITKLRVMSRGQQLIRLDFEDKFEGTNPELVLTRMERALPHVQAVILSDYAKGALEHVEALIAKARAANVPVFIDPKGTNFEPYRGATLLTPNMSEFEAVVGKVTSDDDLVEKALGLIEKFELGALLVTRSEHGMTLVRPDQKPFHLPTQAKEVYDVTGAGDTVISVLAASVAAGKPLDEACALANAAAGVVVGKLGTSTLSTIELAEAIHGSRDTDFGVIAEAALIDAVKAAQAKGEKVVMTNGCFDILHAGHVSYLNNAAKLGDRLIVAVNTDESVKRLKGPGRPVNPTDRRMAVLAGLGAVDWVVPFSEDTPQRLISEVLPDLLVKGGDYKPEDIAGGKEVIAAGGEVKVLNFEDGCSTTEIIDAIKGGRG.

The interval 1–318 (MKPILPDYNN…AEAIHGSRDT (318 aa)) is ribokinase. 195–198 (NMSE) lines the ATP pocket. Asp264 is an active-site residue. Residues 344 to 476 (MTNGCFDILH…IIDAIKGGRG (133 aa)) are cytidylyltransferase.

This sequence in the N-terminal section; belongs to the carbohydrate kinase PfkB family. In the C-terminal section; belongs to the cytidylyltransferase family. In terms of assembly, homodimer.

It carries out the reaction D-glycero-beta-D-manno-heptose 7-phosphate + ATP = D-glycero-beta-D-manno-heptose 1,7-bisphosphate + ADP + H(+). The enzyme catalyses D-glycero-beta-D-manno-heptose 1-phosphate + ATP + H(+) = ADP-D-glycero-beta-D-manno-heptose + diphosphate. It participates in nucleotide-sugar biosynthesis; ADP-L-glycero-beta-D-manno-heptose biosynthesis; ADP-L-glycero-beta-D-manno-heptose from D-glycero-beta-D-manno-heptose 7-phosphate: step 1/4. Its pathway is nucleotide-sugar biosynthesis; ADP-L-glycero-beta-D-manno-heptose biosynthesis; ADP-L-glycero-beta-D-manno-heptose from D-glycero-beta-D-manno-heptose 7-phosphate: step 3/4. The protein operates within bacterial outer membrane biogenesis; LPS core biosynthesis. Functionally, catalyzes the phosphorylation of D-glycero-D-manno-heptose 7-phosphate at the C-1 position to selectively form D-glycero-beta-D-manno-heptose-1,7-bisphosphate. Catalyzes the ADP transfer from ATP to D-glycero-beta-D-manno-heptose 1-phosphate, yielding ADP-D-glycero-beta-D-manno-heptose. The sequence is that of Bifunctional protein HldE from Vibrio vulnificus (strain YJ016).